Here is a 179-residue protein sequence, read N- to C-terminus: Probable chemoreceptor glutamine deamidase CheD 2 (179 aa).

This sequence belongs to the CheD family.

The enzyme catalyses L-glutaminyl-[protein] + H2O = L-glutamyl-[protein] + NH4(+). In terms of biological role, probably deamidates glutamine residues to glutamate on methyl-accepting chemotaxis receptors (MCPs), playing an important role in chemotaxis. The polypeptide is Probable chemoreceptor glutamine deamidase CheD 2 (Ruegeria sp. (strain TM1040) (Silicibacter sp.)).